Consider the following 556-residue polypeptide: Urocanate hydratase (556 aa).

NAD(+) contacts are provided by residues G52–G53, Q130, G176–G178, E196, R201, N242–A243, Q263–H267, Y273–L274, and Y322. Residue C410 is part of the active site. G492 contributes to the NAD(+) binding site.

Belongs to the urocanase family. It depends on NAD(+) as a cofactor.

The protein resides in the cytoplasm. The catalysed reaction is 4-imidazolone-5-propanoate = trans-urocanate + H2O. The protein operates within amino-acid degradation; L-histidine degradation into L-glutamate; N-formimidoyl-L-glutamate from L-histidine: step 2/3. Functionally, catalyzes the conversion of urocanate to 4-imidazolone-5-propionate. In Shewanella oneidensis (strain ATCC 700550 / JCM 31522 / CIP 106686 / LMG 19005 / NCIMB 14063 / MR-1), this protein is Urocanate hydratase.